A 379-amino-acid polypeptide reads, in one-letter code: Mating-type protein MAT-1 (379 aa).

The segment at residues 60 to 117 is a DNA-binding region (alpha box); the sequence is KARKALNAFVGFRCYYITIPMFKPWPMKKLSNLIGLLWEADPNKSLWSLMAKAWSTIR.

The protein belongs to the MATALPHA1 family.

It localises to the nucleus. Functionally, mating type proteins are sequence specific DNA-binding proteins that act as master switches in fungal differentiation by controlling gene expression in a cell type-specific fashion. Transcriptional activator that induces the transcription of alpha-specific genes. This chain is Mating-type protein MAT-1 (MAT1), found in Cochliobolus carbonum (strain 26-R-13) (Maize leaf spot fungus).